The following is a 483-amino-acid chain: MEVNQDVSVREQIFHDWVRECIICSLLFSTLYLLSYIVITKFKKHADFATVDVEDAAVNRIALWMCTFTLAVSVGAVLLLPFSIISNEVLLSVPHNYYIQWLNGSLIHGLWNLVFLFSNLSLVFLMPFAYLFTEAEGFAGSKKGVMSRVYETTVVLLLLTLLVFGIVWVASAIFDDDSAGRESLYDLWEYYLPYLYSGISLFGVLLLLLCTPFGLSRMFSVTGNLLVKPRLLENLEEHLSCTAFEEAAISRKISTKASCWLNLNMEALQKRLLAIQSHRITLEMRRRASPWQRNLVYPLAMLLLLALTGITVLIVCVNVLELLIDEAAMPKGIQGSQLGKVSFSVFGSFGAAVQVILIFYLMASSVVGFYSSPLFIQLLPQKQNTPMTKIIGNCVSLLILSSALPVFSRTLGITRFDLLGDFGRFNWLGNFYLILLYNMMFAGLATLCLVKKFTWAVQAELIRAFGLDRLPLSVKKIRSQGKA.

The Extracellular portion of the chain corresponds to 1 to 21 (MEVNQDVSVREQIFHDWVREC). The chain crosses the membrane as a helical span at residues 22 to 42 (IICSLLFSTLYLLSYIVITKF). Residues 43–60 (KKHADFATVDVEDAAVNR) lie on the Cytoplasmic side of the membrane. A helical transmembrane segment spans residues 61-81 (IALWMCTFTLAVSVGAVLLLP). Residues 82-112 (FSIISNEVLLSVPHNYYIQWLNGSLIHGLWN) are Extracellular-facing. Residues 113 to 133 (LVFLFSNLSLVFLMPFAYLFT) form a helical membrane-spanning segment. Topologically, residues 134-153 (EAEGFAGSKKGVMSRVYETT) are cytoplasmic. The chain crosses the membrane as a helical span at residues 154–174 (VVLLLLTLLVFGIVWVASAIF). Residues 175–194 (DDDSAGRESLYDLWEYYLPY) are Extracellular-facing. Residues 195–215 (LYSGISLFGVLLLLLCTPFGL) traverse the membrane as a helical segment. The Cytoplasmic portion of the chain corresponds to 216-294 (SRMFSVTGNL…RRRASPWQRN (79 aa)). The helical transmembrane segment at 295–315 (LVYPLAMLLLLALTGITVLIV) threads the bilayer. The Extracellular segment spans residues 316–342 (CVNVLELLIDEAAMPKGIQGSQLGKVS). Residues 343–363 (FSVFGSFGAAVQVILIFYLMA) traverse the membrane as a helical segment. The Cytoplasmic segment spans residues 364-386 (SSVVGFYSSPLFIQLLPQKQNTP). Residues 387 to 407 (MTKIIGNCVSLLILSSALPVF) traverse the membrane as a helical segment. The Extracellular segment spans residues 408 to 429 (SRTLGITRFDLLGDFGRFNWLG). A helical transmembrane segment spans residues 430 to 450 (NFYLILLYNMMFAGLATLCLV). Over 451–483 (KKFTWAVQAELIRAFGLDRLPLSVKKIRSQGKA) the chain is Cytoplasmic.

Belongs to the LIMR family. As to quaternary structure, dimer. Can also form higher oligomers.

The protein resides in the cell membrane. It localises to the endoplasmic reticulum membrane. May play a role in lymphocyte development by negatively regulating the canonical Wnt signaling pathway. May act as a LCN1 receptor. The sequence is that of Protein LMBR1L (lmbr1l) from Xenopus laevis (African clawed frog).